A 957-amino-acid polypeptide reads, in one-letter code: Glycine dehydrogenase (decarboxylating) (957 aa).

Lys702 bears the N6-(pyridoxal phosphate)lysine mark.

Belongs to the GcvP family. As to quaternary structure, the glycine cleavage system is composed of four proteins: P, T, L and H. Pyridoxal 5'-phosphate serves as cofactor.

It catalyses the reaction N(6)-[(R)-lipoyl]-L-lysyl-[glycine-cleavage complex H protein] + glycine + H(+) = N(6)-[(R)-S(8)-aminomethyldihydrolipoyl]-L-lysyl-[glycine-cleavage complex H protein] + CO2. Functionally, the glycine cleavage system catalyzes the degradation of glycine. The P protein binds the alpha-amino group of glycine through its pyridoxal phosphate cofactor; CO(2) is released and the remaining methylamine moiety is then transferred to the lipoamide cofactor of the H protein. The chain is Glycine dehydrogenase (decarboxylating) from Synechococcus sp. (strain RCC307).